The sequence spans 497 residues: Guanosine-5'-triphosphate,3'-diphosphate pyrophosphatase (497 aa).

It belongs to the GppA/Ppx family. GppA subfamily.

It carries out the reaction guanosine 3'-diphosphate 5'-triphosphate + H2O = guanosine 3',5'-bis(diphosphate) + phosphate + H(+). The protein operates within purine metabolism; ppGpp biosynthesis; ppGpp from GTP: step 2/2. Catalyzes the conversion of pppGpp to ppGpp. Guanosine pentaphosphate (pppGpp) is a cytoplasmic signaling molecule which together with ppGpp controls the 'stringent response', an adaptive process that allows bacteria to respond to amino acid starvation, resulting in the coordinated regulation of numerous cellular activities. The chain is Guanosine-5'-triphosphate,3'-diphosphate pyrophosphatase from Vibrio cholerae serotype O1 (strain ATCC 39541 / Classical Ogawa 395 / O395).